The following is a 124-amino-acid chain: Small ribosomal subunit protein uS12 (124 aa).

Residue Asp89 is modified to 3-methylthioaspartic acid. A disordered region spans residues 104–124 (TQGVKNRGQARSRYGAKKEKK). Basic residues predominate over residues 111–124 (GQARSRYGAKKEKK).

The protein belongs to the universal ribosomal protein uS12 family. In terms of assembly, part of the 30S ribosomal subunit. Contacts proteins S8 and S17. May interact with IF1 in the 30S initiation complex.

In terms of biological role, with S4 and S5 plays an important role in translational accuracy. Interacts with and stabilizes bases of the 16S rRNA that are involved in tRNA selection in the A site and with the mRNA backbone. Located at the interface of the 30S and 50S subunits, it traverses the body of the 30S subunit contacting proteins on the other side and probably holding the rRNA structure together. The combined cluster of proteins S8, S12 and S17 appears to hold together the shoulder and platform of the 30S subunit. In Micrococcus luteus (strain ATCC 4698 / DSM 20030 / JCM 1464 / CCM 169 / CCUG 5858 / IAM 1056 / NBRC 3333 / NCIMB 9278 / NCTC 2665 / VKM Ac-2230) (Micrococcus lysodeikticus), this protein is Small ribosomal subunit protein uS12.